A 271-amino-acid chain; its full sequence is MTNLSGSMPSSTAADLQPALRVEGLGFYYGTKKVLEGVTMAIPVGKVTAMIGPSGCGKSTLLKAFNRIAELEGRVKVTGKIEFFGQNIYDQKVNINSLRREIGMVFQRPNPFPTSIYDNIVYGVKLCCNVSRAELDEIVERSLTRAVLWDEVKDSLKKSALGLSGGQQQRLCIARALAVNPKVLLMDEPCSALDPISTLKIEELINSLRENVTITIVTHNMQQALRVSDYTAFFNTDESRIGQLVEFDTTQNIFSSPQETQTRDYVAGRFG.

The 247-residue stretch at 20 to 266 (LRVEGLGFYY…PQETQTRDYV (247 aa)) folds into the ABC transporter domain. Position 52–59 (52–59 (GPSGCGKS)) interacts with ATP.

It belongs to the ABC transporter superfamily. Phosphate importer (TC 3.A.1.7) family. In terms of assembly, the complex is composed of two ATP-binding proteins (PstB), two transmembrane proteins (PstC and PstA) and a solute-binding protein (PstS).

The protein localises to the cell inner membrane. The catalysed reaction is phosphate(out) + ATP + H2O = ADP + 2 phosphate(in) + H(+). Part of the ABC transporter complex PstSACB involved in phosphate import. Responsible for energy coupling to the transport system. In Synechocystis sp. (strain ATCC 27184 / PCC 6803 / Kazusa), this protein is Phosphate import ATP-binding protein PstB 3.